The chain runs to 131 residues: Large ribosomal subunit protein bL12 (131 aa).

The protein belongs to the bacterial ribosomal protein bL12 family. Homodimer. Part of the ribosomal stalk of the 50S ribosomal subunit. Forms a multimeric L10(L12)X complex, where L10 forms an elongated spine to which 2 to 4 L12 dimers bind in a sequential fashion. Binds GTP-bound translation factors.

In terms of biological role, forms part of the ribosomal stalk which helps the ribosome interact with GTP-bound translation factors. Is thus essential for accurate translation. This is Large ribosomal subunit protein bL12 from Tropheryma whipplei (strain Twist) (Whipple's bacillus).